A 229-amino-acid polypeptide reads, in one-letter code: MAIGKRLKKIREGIDRTKLYPLDEAVKLVKERAISKFDETIEVAINLGVDPRHADQMVRGVVMLPNGTGRTVRVGVFARGAKADEAKAAGADVVGAEDLVEQVQAGNINFDRCIATPDMMPLVGRLGKVLGPRGMMPNPKIGTVTMDVAGAVKGAKGGSVEFRVEKAGIIQAGVGKASFDADKLVENIKALADAVNKAKPTGAKGTYIQRVAVSSTMGPGVKVEPGTVH.

Belongs to the universal ribosomal protein uL1 family. In terms of assembly, part of the 50S ribosomal subunit.

In terms of biological role, binds directly to 23S rRNA. The L1 stalk is quite mobile in the ribosome, and is involved in E site tRNA release. Protein L1 is also a translational repressor protein, it controls the translation of the L11 operon by binding to its mRNA. The sequence is that of Large ribosomal subunit protein uL1 from Rhodopseudomonas palustris (strain TIE-1).